The primary structure comprises 1111 residues: Lysylphosphatidylglycerol biosynthesis bifunctional protein LysX (1111 aa).

The interval 1–612 (MTLTSPPRTR…VLHHDGTAPD (612 aa)) is phosphatidylglycerol lysyltransferase. 7 helical membrane passes run 18–38 (VPAA…IASV), 60–80 (FPDT…ALAA), 84–104 (IAWW…VADL), 118–138 (VIGL…RPLF), 152–172 (GVLA…LELF), 209–229 (VNAL…IVLF), and 308–328 (AWLA…ASVG). The segment at 613–1111 (MSGLRTDTAD…TLPFPLARPR (499 aa)) is lysine--tRNA ligase. The segment at residues 674–747 (VAGRVLRIRD…GTRSLLVRHW (74 aa)) is a DNA-binding region (OB). Mg(2+) is bound by residues aspartate 1023 and glutamate 1030.

The protein in the N-terminal section; belongs to the LPG synthetase family. It in the C-terminal section; belongs to the class-II aminoacyl-tRNA synthetase family. The cofactor is Mg(2+).

Its subcellular location is the cell membrane. The catalysed reaction is tRNA(Lys) + L-lysine + ATP = L-lysyl-tRNA(Lys) + AMP + diphosphate. The enzyme catalyses L-lysyl-tRNA(Lys) + a 1,2-diacyl-sn-glycero-3-phospho-(1'-sn-glycerol) = a 1,2-diacyl-sn-glycero-3-phospho-1'-(3'-O-L-lysyl)-sn-glycerol + tRNA(Lys). Its function is as follows. Catalyzes the production of L-lysyl-tRNA(Lys)transfer and the transfer of a lysyl group from L-lysyl-tRNA(Lys) to membrane-bound phosphatidylglycerol (PG), which produces lysylphosphatidylglycerol (LPG), one of the components of the bacterial membrane with a positive net charge. LPG synthesis contributes to the resistance to cationic antimicrobial peptides (CAMPs) and likely protects M.tuberculosis against the CAMPs produced by competiting microorganisms (bacteriocins). In fact, the modification of anionic phosphatidylglycerol with positively charged L-lysine results in repulsion of the peptides. This Mycobacterium sp. (strain JLS) protein is Lysylphosphatidylglycerol biosynthesis bifunctional protein LysX (lysX).